The primary structure comprises 400 residues: Flavo-diiron protein FprA2 (400 aa).

The segment at 32 to 216 (GTSYNAYLIK…VVKGLDILDA (185 aa)) is zinc metallo-hydrolase. Fe cation is bound by residues histidine 79, glutamate 81, aspartate 83, histidine 147, aspartate 166, and histidine 226. A Flavodoxin-like domain is found at 257-397 (IPIFYCSAYG…KAFKFGEDFA (141 aa)). FMN is bound by residues 263-267 (SAYGN) and 345-372 (AFGSFGWSGEAIPFVISRLKELKLKVFQ).

In the N-terminal section; belongs to the zinc metallo-hydrolase group 3 family. As to quaternary structure, homotetramer. Requires FMN as cofactor. It depends on Fe cation as a cofactor.

The catalysed reaction is 2 NADH + O2 + 2 H(+) = 2 NAD(+) + 2 H2O. Its function is as follows. Catalyzes the four-electron reduction of molecular oxygen to water. In fact, functions as the terminal component of an NADH oxidase (NADH:O(2) oxidoreductase) when using NADH:rubredoxin oxidoreductase (NROR) and rubredoxin (Rd) as electron transport intermediaries between NADH and FDP. Is thus able to reductively scavenge intracellular dioxygen and is part of an oxidative stress defense system in C.acetobutylicum, an obligate anaerobic bacterium. Can also serve as the terminal component of an NADH:nitric oxide oxidoreductase (NOR) with a catalytic efficiency comparable to that of its NADH oxidase activity, and therefore might have an in vivo role in scavenging nitric oxide. This is Flavo-diiron protein FprA2 (fprA2) from Clostridium acetobutylicum (strain ATCC 824 / DSM 792 / JCM 1419 / IAM 19013 / LMG 5710 / NBRC 13948 / NRRL B-527 / VKM B-1787 / 2291 / W).